The following is a 317-amino-acid chain: MTPALKSTFVLAHRHLLGIEGLSAADITGLLDLSEEYVELNRQVDKKRASLRGRTQVNLFFEASTRTQSSFEIAGKRLGADVMNMSVSSSSMRKGETLMDTAVTLNAMHPDILVVRHHASGAVELLARKVDGSVINAGDGAHEHPTQALLDALTIRRNKGRLEGLVVAICGDVMHSRVARSNILLLNTMGARVRVVAPSTLLPRGIERMGVEVARDMREGLDGADIVMMLRLQRERMNGSFVPSSGEYFHYFGLDQKKLAYAKPDALVMHPGPMNRGVEIDSIVADGAQSVIREQVEMGVAVRMAVLEALARNLPNA.

Carbamoyl phosphate is bound by residues R66 and T67. Position 94 (K94) interacts with L-aspartate. Carbamoyl phosphate contacts are provided by R116, H144, and Q147. Residues R177 and R231 each coordinate L-aspartate. Carbamoyl phosphate contacts are provided by G272 and P273.

The protein belongs to the aspartate/ornithine carbamoyltransferase superfamily. ATCase family. Heterododecamer (2C3:3R2) of six catalytic PyrB chains organized as two trimers (C3), and six regulatory PyrI chains organized as three dimers (R2).

It carries out the reaction carbamoyl phosphate + L-aspartate = N-carbamoyl-L-aspartate + phosphate + H(+). It functions in the pathway pyrimidine metabolism; UMP biosynthesis via de novo pathway; (S)-dihydroorotate from bicarbonate: step 2/3. In terms of biological role, catalyzes the condensation of carbamoyl phosphate and aspartate to form carbamoyl aspartate and inorganic phosphate, the committed step in the de novo pyrimidine nucleotide biosynthesis pathway. In Rhodopseudomonas palustris (strain HaA2), this protein is Aspartate carbamoyltransferase catalytic subunit.